A 512-amino-acid chain; its full sequence is MIWHVQNENFILDSTRIFMKAFHLLLFDGSFIFPECILIFGLILLLMIDLTSDQKDIPWLYFISSTSFVMSITALLFRWREEPMISFSGNFQTNNFNEIFQFLILLCSTLCIPLSVEYIECTEMAITEFLLFILTATLGGMFLCGANDLITIFVALECFSLCSYLLSGYTKKDIRSNEATMKYLLMGGASSSILVYGFSWLYGSSGGEIELQEIVNGLINTQMYNSPGISIALIFITVGIGFKLSLAPFHQWTPDVYEGSPTPVVAFLSVTSKVAALALATRIFDIPFYFSSNEWHLLLEILAILSMIFGNLIAITQTSMKRMLAYSSIGQIGYVIIGIIVGDSNGGYASMITYMLFYIAMNLGTFACIILFGLRTGTDNIRDYAGLYTKDPFLALSLALCLLSLGGLPPLAGFFGKLYLFWCGWQAGLYFLVSIGLLTSVLSIYYYLKIIKLLMTGRNQEITPHMRNYRISPLRSNNSIELSMIVCVIASTILGISMNPIIAIAQDTLFSF.

The next 14 helical transmembrane spans lie at 31–51, 57–77, 99–119, 124–144, 149–169, 183–203, 229–249, 261–281, 295–315, 323–343, 354–374, 395–415, 418–438, and 484–504; these read FIFP…IDLT, IPWL…ALLF, IFQF…VEYI, MAIT…MFLC, LITI…LSGY, YLLM…WLYG, ISIA…LAPF, PTPV…ALAT, WHLL…LIAI, MLAY…IVGD, YMLF…LFGL, ALSL…AGFF, LYLF…IGLL, and MIVC…IIAI.

This sequence belongs to the complex I subunit 2 family. In terms of assembly, NDH is composed of at least 16 different subunits, 5 of which are encoded in the nucleus.

Its subcellular location is the plastid. It localises to the chloroplast thylakoid membrane. It carries out the reaction a plastoquinone + NADH + (n+1) H(+)(in) = a plastoquinol + NAD(+) + n H(+)(out). The enzyme catalyses a plastoquinone + NADPH + (n+1) H(+)(in) = a plastoquinol + NADP(+) + n H(+)(out). NDH shuttles electrons from NAD(P)H:plastoquinone, via FMN and iron-sulfur (Fe-S) centers, to quinones in the photosynthetic chain and possibly in a chloroplast respiratory chain. The immediate electron acceptor for the enzyme in this species is believed to be plastoquinone. Couples the redox reaction to proton translocation, and thus conserves the redox energy in a proton gradient. The polypeptide is NAD(P)H-quinone oxidoreductase subunit 2 B, chloroplastic (Arabidopsis thaliana (Mouse-ear cress)).